The primary structure comprises 399 residues: Acetate kinase (399 aa).

Asn-7 lines the Mg(2+) pocket. Residue Lys-14 coordinates ATP. Residue Arg-89 coordinates substrate. Residue Asp-146 is the Proton donor/acceptor of the active site. Residues 206–210, 280–282, and 328–332 contribute to the ATP site; these read HLGNG, DMR, and GIGEN. Mg(2+) is bound at residue Glu-382.

This sequence belongs to the acetokinase family. In terms of assembly, homodimer. Mg(2+) is required as a cofactor. Requires Mn(2+) as cofactor.

It is found in the cytoplasm. The enzyme catalyses acetate + ATP = acetyl phosphate + ADP. It participates in metabolic intermediate biosynthesis; acetyl-CoA biosynthesis; acetyl-CoA from acetate: step 1/2. In terms of biological role, catalyzes the formation of acetyl phosphate from acetate and ATP. Can also catalyze the reverse reaction. This chain is Acetate kinase, found in Campylobacter fetus subsp. fetus (strain 82-40).